A 67-amino-acid polypeptide reads, in one-letter code: Metallothionein-B (67 aa).

The protein belongs to the metallothionein superfamily. Type 4 family.

Its function is as follows. Metallothioneins have a high content of cysteine residues that bind various heavy metals. This chain is Metallothionein-B, found in Sphaerechinus granularis (Purple sea urchin).